Consider the following 135-residue polypeptide: NADPH-dependent 7-cyano-7-deazaguanine reductase (135 aa).

Catalysis depends on Cys-48, which acts as the Thioimide intermediate. Asp-55 serves as the catalytic Proton donor. Residues 70 to 72 (LEL) and 89 to 90 (HE) contribute to the substrate site.

This sequence belongs to the GTP cyclohydrolase I family. QueF type 1 subfamily.

The protein resides in the cytoplasm. The enzyme catalyses 7-aminomethyl-7-carbaguanine + 2 NADP(+) = 7-cyano-7-deazaguanine + 2 NADPH + 3 H(+). Its pathway is tRNA modification; tRNA-queuosine biosynthesis. In terms of biological role, catalyzes the NADPH-dependent reduction of 7-cyano-7-deazaguanine (preQ0) to 7-aminomethyl-7-deazaguanine (preQ1). The polypeptide is NADPH-dependent 7-cyano-7-deazaguanine reductase (Prochlorococcus marinus (strain SARG / CCMP1375 / SS120)).